Here is a 327-residue protein sequence, read N- to C-terminus: Aspartate--ammonia ligase (327 aa).

This sequence belongs to the class-II aminoacyl-tRNA synthetase family. AsnA subfamily.

The protein resides in the cytoplasm. The catalysed reaction is L-aspartate + NH4(+) + ATP = L-asparagine + AMP + diphosphate + H(+). It functions in the pathway amino-acid biosynthesis; L-asparagine biosynthesis; L-asparagine from L-aspartate (ammonia route): step 1/1. This Bacillus cereus (strain AH820) protein is Aspartate--ammonia ligase.